The chain runs to 1119 residues: Protein translocase subunit SecA (1119 aa).

ATP contacts are provided by residues Gln-177, Gly-195–Thr-199, and Asp-692. The disordered stretch occupies residues Ala-1025–Ile-1081. Over residues His-1029 to Ala-1055 the composition is skewed to basic and acidic residues. Over residues Ala-1059–Val-1070 the composition is skewed to polar residues.

The protein belongs to the SecA family. In terms of assembly, monomer and homodimer. Part of the essential Sec protein translocation apparatus which comprises SecA, SecYEG and auxiliary proteins SecDF. Other proteins may also be involved.

Its subcellular location is the cell inner membrane. It is found in the cytoplasm. The enzyme catalyses ATP + H2O + cellular proteinSide 1 = ADP + phosphate + cellular proteinSide 2.. Part of the Sec protein translocase complex. Interacts with the SecYEG preprotein conducting channel. Has a central role in coupling the hydrolysis of ATP to the transfer of proteins into and across the cell membrane, serving as an ATP-driven molecular motor driving the stepwise translocation of polypeptide chains across the membrane. In Christiangramia forsetii (strain DSM 17595 / CGMCC 1.15422 / KT0803) (Gramella forsetii), this protein is Protein translocase subunit SecA.